Reading from the N-terminus, the 661-residue chain is Transketolase (661 aa).

His30 is a substrate binding site. Residues His70 and 118 to 120 (GPL) each bind thiamine diphosphate. Residues 99 to 118 (STTPGHPEFRDTPGVEATTG) are disordered. Mg(2+) is bound at residue Asp159. 2 residues coordinate thiamine diphosphate: Gly160 and Asn189. Residues Asn189 and Val191 each coordinate Mg(2+). The substrate site is built by His266, Arg357, and Ser384. His266 is a thiamine diphosphate binding site. The active-site Proton donor is Glu411. A thiamine diphosphate-binding site is contributed by Phe437. Positions 461, 469, and 520 each coordinate substrate.

It belongs to the transketolase family. In terms of assembly, homodimer. Mg(2+) is required as a cofactor. Requires Ca(2+) as cofactor. It depends on Mn(2+) as a cofactor. Co(2+) serves as cofactor. The cofactor is thiamine diphosphate.

It carries out the reaction D-sedoheptulose 7-phosphate + D-glyceraldehyde 3-phosphate = aldehydo-D-ribose 5-phosphate + D-xylulose 5-phosphate. In terms of biological role, catalyzes the transfer of a two-carbon ketol group from a ketose donor to an aldose acceptor, via a covalent intermediate with the cofactor thiamine pyrophosphate. The protein is Transketolase (tkt) of Physarum polycephalum (Slime mold).